Reading from the N-terminus, the 245-residue chain is Uridylate kinase (245 aa).

An ATP-binding site is contributed by 12–15; that stretch reads KLSG. The tract at residues 20–25 is involved in allosteric activation by GTP; sequence GEKGVG. Residue G54 participates in UMP binding. Residues G55 and R59 each coordinate ATP. UMP contacts are provided by residues D74 and 135–142; that span reads IGSPYFST. Positions 163, 169, and 172 each coordinate ATP.

The protein belongs to the UMP kinase family. As to quaternary structure, homohexamer.

The protein localises to the cytoplasm. The catalysed reaction is UMP + ATP = UDP + ADP. Its pathway is pyrimidine metabolism; CTP biosynthesis via de novo pathway; UDP from UMP (UMPK route): step 1/1. Allosterically activated by GTP. Inhibited by UTP. Its function is as follows. Catalyzes the reversible phosphorylation of UMP to UDP. This is Uridylate kinase from Streptococcus thermophilus (strain ATCC BAA-250 / LMG 18311).